Here is a 71-residue protein sequence, read N- to C-terminus: SRY-related protein LG28 (71 aa).

Residues 1 to 68 constitute a DNA-binding region (HMG box); sequence VKRPMNAFMV…KHMADYPDYK (68 aa).

The protein resides in the nucleus. This chain is SRY-related protein LG28, found in Eublepharis macularius (Leopard gecko).